Reading from the N-terminus, the 556-residue chain is Bifunctional methyltransferase (556 aa).

An RF MTase region spans residues Met1 to Gln310. S-adenosyl-L-methionine is bound by residues Gly148 to Gly152, Asp171, Trp200, and Asn215. Asn215 to Tyr218 is a substrate binding site. The segment at Arg313–Tyr556 is tRNA MTase. Residues Lys348 to Ser399 form an insert region. Residues Glu403, Glu428, Asn455, and Asp477 each coordinate S-adenosyl-L-methionine. The active site involves Asp477. Lys481 and Asp513 together coordinate substrate.

In the C-terminal section; belongs to the class I-like SAM-binding methyltransferase superfamily. TrmB family. This sequence in the N-terminal section; belongs to the protein N5-glutamine methyltransferase family. PrmC subfamily.

The catalysed reaction is L-glutaminyl-[peptide chain release factor] + S-adenosyl-L-methionine = N(5)-methyl-L-glutaminyl-[peptide chain release factor] + S-adenosyl-L-homocysteine + H(+). The enzyme catalyses guanosine(46) in tRNA + S-adenosyl-L-methionine = N(7)-methylguanosine(46) in tRNA + S-adenosyl-L-homocysteine. Functionally, methylates the class 1 translation termination release factors RF1/PrfA and RF2/PrfB on the glutamine residue of the universally conserved GGQ motif. In terms of biological role, catalyzes the formation of N(7)-methylguanine at position 46 (m7G46) in tRNA. This is Bifunctional methyltransferase (prmC/trmB) from Rickettsia bellii (strain RML369-C).